Consider the following 195-residue polypeptide: Transmembrane protein 126A (195 aa).

The Mitochondrial matrix portion of the chain corresponds to Met-1–Glu-33. The helical transmembrane segment at Asn-34–Phe-54 threads the bilayer. Residues Arg-55–Arg-56 lie on the Mitochondrial intermembrane side of the membrane. The chain crosses the membrane as a helical span at residues Ile-57–Leu-77. Over Thr-78–Gly-110 the chain is Mitochondrial matrix. Residues Leu-111–Ala-131 form a helical membrane-spanning segment. Topologically, residues Arg-132–Lys-158 are mitochondrial intermembrane. The helical transmembrane segment at Met-159 to Ser-175 threads the bilayer. The Mitochondrial matrix segment spans residues Glu-176 to His-195.

The protein belongs to the TMEM126 family. Interacts with OXA1L; promoting cotranslational quality control in mitochondria. As to expression, strongly expressed in brain, cerebellum, skeletal muscle, testis. High expression also found in fetal brain, fetal retinal pigmentary epithelium, and fetal retina. Highly expressed in retinal ganglion cells.

Its subcellular location is the mitochondrion inner membrane. In terms of biological role, protein required for the cotranslational protein quality control in the inner membrane of the mitochondria. Associates with newly synthesized polypeptides and may act as a chaperone that cooperates with OXA1L for the insertion of newly synthesized mitochondrial proteins into the inner membrane. Required for the assembly of the ND4 module of mitochondrial complex I. This Homo sapiens (Human) protein is Transmembrane protein 126A.